A 301-amino-acid polypeptide reads, in one-letter code: Single-stranded DNA-binding protein (301 aa).

An LAST region spans residues 3–7 (KRKST). 4 residues coordinate Zn(2+): His-64, Cys-77, Cys-87, and Cys-90. The tract at residues 272 to 301 (TKTEDDFMSSSSGSSSSADDTDLDDLLNDL) is disordered. Over residues 279–289 (MSSSSGSSSSA) the composition is skewed to low complexity. Residues 290–301 (DDTDLDDLLNDL) are compositionally biased toward acidic residues.

This sequence belongs to the Tequatrovirus single-stranded DNA-binding protein family. Homodimer in the absence of DNA, monomer when binding DNA. Interacts with the DNA helicase assembly protein; a ternary complex between the helicase assembly protein, the single-stranded DNA-binding protein and ssDNA is an obligatory intermediate in the helicase loading mechanism. Part of the replicase complex that includes the DNA polymerase, the polymerase clamp, the clamp loader complex, the single-stranded DNA binding protein, the primase, the DnaB-like SF4 replicative helicase and the helicase assembly factor. Interacts (via C-terminus) with the viral SF1 dDA helicase. Interacts with the viral SF2 UvsW repair helicase.

In terms of biological role, single-stranded DNA-binding protein that participates in viral DNA replication, recombination, and repair. Coats the lagging-strand ssDNA as the replication fork advances. Stimulates the activities of viral DNA polymerase and DnaB-like SF4 replicative helicase, probably via its interaction with the helicase assembly factor. Stimulates the unwinding activity of UvsW helicase, inhibits it DNA winding activity. Together with DnaB-like SF4 replicative helicase and the helicase assembly factor, promotes pairing of two homologous DNA molecules containing complementary single-stranded regions and mediates homologous DNA strand exchange. Also promotes the formation of joint molecules. mRNA specific autogenous translational repressor. This Escherichia coli (Bacteriophage T4) protein is Single-stranded DNA-binding protein.